Consider the following 450-residue polypeptide: Phosphoglucosamine mutase (450 aa).

Catalysis depends on Ser-102, which acts as the Phosphoserine intermediate. Positions 102, 242, 244, and 246 each coordinate Mg(2+). Ser-102 carries the phosphoserine modification.

It belongs to the phosphohexose mutase family. The cofactor is Mg(2+). In terms of processing, activated by phosphorylation.

The catalysed reaction is alpha-D-glucosamine 1-phosphate = D-glucosamine 6-phosphate. Catalyzes the conversion of glucosamine-6-phosphate to glucosamine-1-phosphate. This is Phosphoglucosamine mutase from Lachnospira eligens (strain ATCC 27750 / DSM 3376 / VPI C15-48 / C15-B4) (Eubacterium eligens).